The sequence spans 612 residues: Bile salt-activated lipase (612 aa).

The N-terminal stretch at 1 to 20 (MGRLEVLFLGLTCCLAAACA) is a signal peptide. Cys84 and Cys100 are disulfide-bonded. Asn207 carries N-linked (GlcNAc...) asparagine glycosylation. The Acyl-ester intermediate role is filled by Ser214. Cys266 and Cys277 are joined by a disulfide. Catalysis depends on charge relay system residues Asp340 and His455. Residues 553–612 (VGDHTPPEDDSEAAPVPPTDDSQGGPVPPTDDSQTTPVPPTDNSQAGDSVEAQMPGPIGF) form a disordered region. A run of 4 repeats spans residues 556–566 (HTPPEDDSEAA), 567–577 (PVPPTDDSQGG), 578–588 (PVPPTDDSQTT), and 589–599 (PVPPTDNSQAG). The 4 X 11 AA tandem repeats, O-glycosylated region stretch occupies residues 556–599 (HTPPEDDSEAAPVPPTDDSQGGPVPPTDDSQTTPVPPTDNSQAG). Polar residues predominate over residues 583–599 (DDSQTTPVPPTDNSQAG).

The protein belongs to the type-B carboxylesterase/lipase family. Interacts with CLC. In terms of tissue distribution, synthesized primarily in the pancreas and then transported to the intestine.

The protein resides in the secreted. It catalyses the reaction a triacylglycerol + H2O = a diacylglycerol + a fatty acid + H(+). The catalysed reaction is 1,2,3-tri-(9Z-octadecenoyl)-glycerol + H2O = di-(9Z)-octadecenoylglycerol + (9Z)-octadecenoate + H(+). It carries out the reaction 1,2,3-trioctanoylglycerol + H2O = dioctanoylglycerol + octanoate + H(+). The enzyme catalyses a sterol ester + H2O = a sterol + a fatty acid + H(+). It catalyses the reaction cholesteryl (9Z-octadecenoate) + H2O = cholesterol + (9Z)-octadecenoate + H(+). The catalysed reaction is an acetyl ester + H2O = an aliphatic alcohol + acetate + H(+). It carries out the reaction a butanoate ester + H2O = an aliphatic alcohol + butanoate + H(+). The enzyme catalyses 9-hexadecanoyloxy-octadecanoate + H2O = 9-hydroxy-octadecanoate + hexadecanoate + H(+). It catalyses the reaction 9-(9Z-octadecenoyloxy)-octadecanoate + H2O = 9-hydroxy-octadecanoate + (9Z)-octadecenoate + H(+). The catalysed reaction is 1-hexadecanoyl-sn-glycero-3-phosphocholine + H2O = sn-glycerol 3-phosphocholine + hexadecanoate + H(+). It carries out the reaction 12-hexadecanoyloxy-octadecanoate + H2O = 12-hydroxyoctadecanoate + hexadecanoate + H(+). The enzyme catalyses 12-(9Z-octadecenoyloxy)-octadecanoate + H2O = 12-hydroxyoctadecanoate + (9Z)-octadecenoate + H(+). It catalyses the reaction 13-(9Z-octadecenoyloxy)-octadecanoate + H2O = 13-hydroxy-octadecanoate + (9Z)-octadecenoate + H(+). The catalysed reaction is 9-(9Z-hexadecenoyloxy)-octadecanoate + H2O = (9Z)-hexadecenoate + 9-hydroxy-octadecanoate + H(+). It carries out the reaction 12-(9Z-hexadecenoyloxy)-octadecanoate + H2O = 12-hydroxyoctadecanoate + (9Z)-hexadecenoate + H(+). The enzyme catalyses 13-(9Z-hexadecenoyloxy)-octadecanoate + H2O = 13-hydroxy-octadecanoate + (9Z)-hexadecenoate + H(+). It catalyses the reaction 12-octadecanoyloxy-octadecanoate + H2O = 12-hydroxyoctadecanoate + octadecanoate + H(+). The catalysed reaction is 13-octadecanoyloxy-octadecanoate + H2O = 13-hydroxy-octadecanoate + octadecanoate + H(+). It carries out the reaction 5-(9Z-hexadecenoyloxy)-octadecanoate + H2O = 5-hydroxy-octadecanoate + (9Z)-hexadecenoate + H(+). The enzyme catalyses 9-octadecanoyloxy-octadecanoate + H2O = 9-hydroxy-octadecanoate + octadecanoate + H(+). Its activity is regulated as follows. Activated by bile salts such as sodium taurocholate. Catalyzes the hydrolysis of a wide range of substrates including cholesteryl esters, phospholipids, lysophospholipids, di- and tri-acylglycerols, and fatty acid esters of hydroxy fatty acids (FAHFA). Preferentially hydrolyzes FAHFAs with the ester bond further away from the carboxylate. Unsaturated FAHFAs are hydrolyzed more quickly than saturated FAHFAs. Has an essential role in the complete digestion of dietary lipids and their intestinal absorption, along with the absorption of fat-soluble vitamins. The chain is Bile salt-activated lipase (Cel) from Rattus norvegicus (Rat).